A 588-amino-acid chain; its full sequence is NADP-dependent malic enzyme 2 (588 aa).

The segment at 1–21 (MGSTPTDLPGEDVADNRSGVG) is disordered. Gly-2 carries the post-translational modification N-acetylglycine. The active-site Proton donor is the Tyr-136. Arg-189 contacts NADP(+). Lys-207 (proton acceptor) is an active-site residue. A divalent metal cation is bound by residues Glu-279, Asp-280, and Asp-303. Residues Asp-303, 332-348 (LFLGAGEAGTGIAELIA), and Asn-444 each bind NADP(+).

It belongs to the malic enzymes family. In terms of assembly, homohexamers and homooctamers. Mg(2+) serves as cofactor. The cofactor is Mn(2+). Expressed in leaves, stems, flowers and roots. Particularly present in vasculatures, trichome basal cells and hydatodes.

The protein resides in the cytoplasm. It carries out the reaction (S)-malate + NADP(+) = pyruvate + CO2 + NADPH. The catalysed reaction is oxaloacetate + H(+) = pyruvate + CO2. With respect to regulation, activated by coenzyme A (CoA), aspartate, succinate and fumarate. Repressed by oxaloacetate, glucose and ATP. The polypeptide is NADP-dependent malic enzyme 2 (NADP-ME2) (Arabidopsis thaliana (Mouse-ear cress)).